The following is a 198-amino-acid chain: Rac-like GTP-binding protein ARAC3 (198 aa).

Residues 13–21, 31–38, 60–64, and 118–121 contribute to the GTP site; these read GDGAVGKTC, FPTDYVPT, DTAGQ, and TKLD. Residues 35-43 carry the Effector region motif; the sequence is YVPTVFDNF. A lipid anchor (S-palmitoyl cysteine) is attached at Cys-158. The residue at position 195 (Cys-195) is a Cysteine methyl ester. Cys-195 is lipidated: S-geranylgeranyl cysteine. Positions 196–198 are cleaved as a propeptide — removed in mature form; sequence SIL.

This sequence belongs to the small GTPase superfamily. Rho family. Interacts with Rho GDP-dissociation inhibitor 1 and ICR1. Binds to SPK1 when in the inactive GDP-bound form. In terms of tissue distribution, ubiquitous. Preferentially expressed at the tip of root hairs.

The protein localises to the cytoplasm. It localises to the cell membrane. Inactive GDP-bound Rho GTPases reside in the cytosol, are found in a complex with Rho GDP-dissociation inhibitors (Rho GDIs), and are released from the GDI protein in order to translocate to membranes upon activation. Involved in cell polarity control during the actin-dependent tip growth of root hairs, thus regulating root hair length and root hair initiation. Contributes, in a SPK1-dependent manner, to the prevention of cortical microtubules organization into parallel arrays oriented perpendicular to the axis of cell elongation to limit anisotropic cell growth during petal development. SPK1-dependent activation is required for auxin-mediated inhibition of PIN2 internalization during gravitropic responses. This is Rac-like GTP-binding protein ARAC3 from Arabidopsis thaliana (Mouse-ear cress).